The following is a 335-amino-acid chain: DNA primase small subunit PriS (335 aa).

Catalysis depends on residues Asp96, Asp98, and Asp243.

Belongs to the eukaryotic-type primase small subunit family. Heterodimer of a small subunit (PriS) and a large subunit (PriL). Mg(2+) is required as a cofactor. It depends on Mn(2+) as a cofactor.

Catalytic subunit of DNA primase, an RNA polymerase that catalyzes the synthesis of short RNA molecules used as primers for DNA polymerase during DNA replication. The small subunit contains the primase catalytic core and has DNA synthesis activity on its own. Binding to the large subunit stabilizes and modulates the activity, increasing the rate of DNA synthesis while decreasing the length of the DNA fragments, and conferring RNA synthesis capability. The DNA polymerase activity may enable DNA primase to also catalyze primer extension after primer synthesis. May also play a role in DNA repair. The sequence is that of DNA primase small subunit PriS from Archaeoglobus fulgidus (strain ATCC 49558 / DSM 4304 / JCM 9628 / NBRC 100126 / VC-16).